The chain runs to 1227 residues: Beta-alanyl-bioamine nonribosomal peptide synthetase (1227 aa).

Positions 1–850 (MPQSTAQLKS…FGKNSRDFKL (850 aa)) are adenylation. Residues 851 to 931 (SRGRERARKV…SILTSLQNTE (81 aa)) enclose the Carrier domain. Ser-892 is modified (O-(pantetheine 4'-phosphoryl)serine). Residues 932-1227 (SDFLKTQEPF…YMIKELNPSS (296 aa)) are condensation.

Belongs to the NRP synthetase family. Requires pantetheine 4'-phosphate as cofactor. As to expression, in virgin and paired males, bilaterally expressed in some cells in the head. During pairing, expressed throughout the ventral side of the body probably in ciliated neurons. Highly expressed in virgin females in cells throughout the body and only weakly expressed in sexually mature females. In virgin females, expressed in some cells in the head and on the dorsal surface and lateral edges of body.

The enzyme catalyses tryptamine + beta-alanine + ATP = beta-alanyl-tryptamine + AMP + diphosphate + H(+). It carries out the reaction beta-alanine + ATP + H(+) = beta-alanyl-5'-AMP + diphosphate. It catalyses the reaction beta-alanyl-5'-AMP + holo-[peptidyl-carrier protein] = beta-alanyl-[peptidyl-carrier protein] + AMP + H(+). The catalysed reaction is beta-alanyl-[peptidyl-carrier protein] + tryptamine = beta-alanyl-tryptamine + holo-[peptidyl-carrier protein] + H(+). Catalyzes the condensation of beta-alanine with tryptamine to form beta-alanyl-tryptamine (BATT). Beta-alanyl-tryptamine is an essential pheromone produced by the male that stimulates female sexual development during pairing. In Schistosoma mansoni (Blood fluke), this protein is Beta-alanyl-bioamine nonribosomal peptide synthetase.